Consider the following 411-residue polypeptide: Citrate synthase (411 aa).

Active-site residues include His-304 and Asp-363.

The protein belongs to the citrate synthase family.

It catalyses the reaction oxaloacetate + acetyl-CoA + H2O = citrate + CoA + H(+). It functions in the pathway carbohydrate metabolism; tricarboxylic acid cycle; isocitrate from oxaloacetate: step 1/2. This is Citrate synthase (gltA) from Rickettsia australis.